A 267-amino-acid chain; its full sequence is MSVNHYHNTLSLHHHHQNDVAIAQRESLFEKSLTPSDVGKLNRLVIPKQHAEKYFPLNNNNNNGGSGDDVATTEKGMLLSFEDESGKCWKFRYSYWNSSQSYVLTKGWSRYVKDKHLDAGDVVFFQRHRFDLHRLFIGWRRRGEASSSPAVSVVSQEALVNTTAYWSGLTTPYRQVHASTTYPNIHQEYSHYGAVVDHAQSIPPVVAGSSRTVRLFGVNLECHGDAVEPPPRPDVYNDQHIYYYSTPHPMNISFAGEALEQVGDGRG.

The segment at residues Phe29–Gly143 is a DNA-binding region (TF-B3).

It localises to the nucleus. The protein is B3 domain-containing protein At3g11580 (ARF32) of Arabidopsis thaliana (Mouse-ear cress).